The chain runs to 704 residues: Elongation factor G (704 aa).

The tr-type G domain maps to 10 to 286 (KKVRNIGIMA…AVIDFLPNPM (277 aa)). GTP-binding positions include 19–26 (AHIDAGKT), 83–87 (DTPGH), and 137–140 (NKMD).

The protein belongs to the TRAFAC class translation factor GTPase superfamily. Classic translation factor GTPase family. EF-G/EF-2 subfamily.

It localises to the cytoplasm. Catalyzes the GTP-dependent ribosomal translocation step during translation elongation. During this step, the ribosome changes from the pre-translocational (PRE) to the post-translocational (POST) state as the newly formed A-site-bound peptidyl-tRNA and P-site-bound deacylated tRNA move to the P and E sites, respectively. Catalyzes the coordinated movement of the two tRNA molecules, the mRNA and conformational changes in the ribosome. In Corynebacterium jeikeium (strain K411), this protein is Elongation factor G.